The chain runs to 342 residues: Ribosomal RNA small subunit methyltransferase C (342 aa).

It belongs to the methyltransferase superfamily. RsmC family. As to quaternary structure, monomer.

Its subcellular location is the cytoplasm. The enzyme catalyses guanosine(1207) in 16S rRNA + S-adenosyl-L-methionine = N(2)-methylguanosine(1207) in 16S rRNA + S-adenosyl-L-homocysteine + H(+). In terms of biological role, specifically methylates the guanine in position 1207 of 16S rRNA in the 30S particle. This chain is Ribosomal RNA small subunit methyltransferase C, found in Salmonella typhi.